A 352-amino-acid chain; its full sequence is Histidine biosynthesis bifunctional protein HisB (352 aa).

Positions 1-164 are histidinol-phosphatase; the sequence is MSQKILFIDR…EIENEILSSF (164 aa). Asp9 functions as the Nucleophile in the catalytic mechanism. The Mg(2+) site is built by Asp9 and Asp11. The Proton donor role is filled by Asp11. Residues Cys93, His95, Cys101, and Cys103 each contribute to the Zn(2+) site. Residue Asp130 coordinates Mg(2+). Residues 165–352 are imidazoleglycerol-phosphate dehydratase; sequence RSASYQRTTK…ENLASSKGVI (188 aa).

In the N-terminal section; belongs to the histidinol-phosphatase family. The protein in the C-terminal section; belongs to the imidazoleglycerol-phosphate dehydratase family. It depends on Mg(2+) as a cofactor. Zn(2+) is required as a cofactor.

It is found in the cytoplasm. It catalyses the reaction D-erythro-1-(imidazol-4-yl)glycerol 3-phosphate = 3-(imidazol-4-yl)-2-oxopropyl phosphate + H2O. The catalysed reaction is L-histidinol phosphate + H2O = L-histidinol + phosphate. The protein operates within amino-acid biosynthesis; L-histidine biosynthesis; L-histidine from 5-phospho-alpha-D-ribose 1-diphosphate: step 6/9. Its pathway is amino-acid biosynthesis; L-histidine biosynthesis; L-histidine from 5-phospho-alpha-D-ribose 1-diphosphate: step 8/9. This Campylobacter jejuni subsp. jejuni serotype O:23/36 (strain 81-176) protein is Histidine biosynthesis bifunctional protein HisB.